A 310-amino-acid chain; its full sequence is Beta-ketoacyl-[acyl-carrier-protein] synthase III (310 aa).

Active-site residues include Cys112 and His235. The ACP-binding stretch occupies residues 236–240 (QANIR). Asn265 is an active-site residue.

It belongs to the thiolase-like superfamily. FabH family. Homodimer.

It is found in the cytoplasm. It catalyses the reaction malonyl-[ACP] + acetyl-CoA + H(+) = 3-oxobutanoyl-[ACP] + CO2 + CoA. The protein operates within lipid metabolism; fatty acid biosynthesis. Functionally, catalyzes the condensation reaction of fatty acid synthesis by the addition to an acyl acceptor of two carbons from malonyl-ACP. Catalyzes the first condensation reaction which initiates fatty acid synthesis and may therefore play a role in governing the total rate of fatty acid production. Possesses both acetoacetyl-ACP synthase and acetyl transacylase activities. Its substrate specificity determines the biosynthesis of branched-chain and/or straight-chain of fatty acids. In Geobacillus kaustophilus (strain HTA426), this protein is Beta-ketoacyl-[acyl-carrier-protein] synthase III.